We begin with the raw amino-acid sequence, 446 residues long: N-succinylarginine dihydrolase (446 aa).

Residues 19–28, N110, and 137–138 each bind substrate; these read AGLSYGNVAS and HR. E174 is an active-site residue. Position 214 (R214) interacts with substrate. H250 is an active-site residue. D252 and N363 together coordinate substrate. C369 serves as the catalytic Nucleophile.

This sequence belongs to the succinylarginine dihydrolase family. In terms of assembly, homodimer.

It carries out the reaction N(2)-succinyl-L-arginine + 2 H2O + 2 H(+) = N(2)-succinyl-L-ornithine + 2 NH4(+) + CO2. It functions in the pathway amino-acid degradation; L-arginine degradation via AST pathway; L-glutamate and succinate from L-arginine: step 2/5. Catalyzes the hydrolysis of N(2)-succinylarginine into N(2)-succinylornithine, ammonia and CO(2). The sequence is that of N-succinylarginine dihydrolase from Pseudoalteromonas atlantica (strain T6c / ATCC BAA-1087).